We begin with the raw amino-acid sequence, 66 residues long: UPF0337 protein BT9727_0908 (66 aa).

The segment at 1–22 (MSENGLKEQITGKVEKTKGQVK) is disordered. Positions 13–22 (KVEKTKGQVK) are enriched in basic and acidic residues.

It belongs to the UPF0337 (CsbD) family.

In Bacillus thuringiensis subsp. konkukian (strain 97-27), this protein is UPF0337 protein BT9727_0908.